The sequence spans 304 residues: Olfactory receptor 52A4 (304 aa).

The Extracellular portion of the chain corresponds to 1–32 (MALPITNGTLFMPFVLTFIGIPGFESVQCWIG). Asparagine 7 carries an N-linked (GlcNAc...) asparagine glycan. The chain crosses the membrane as a helical span at residues 33–53 (IPFCATYVIALIGNSLLLIII). Over 54–61 (KSEPSLHE) the chain is Cytoplasmic. Residues 62–82 (PMYIFLATLGATDISLSTSIV) traverse the membrane as a helical segment. The Extracellular portion of the chain corresponds to 83–103 (PKMLDIFWFHLPEIYFDACLF). Cysteines 101 and 184 form a disulfide. A helical transmembrane segment spans residues 104–124 (QMWLIHTFQGIESGVLLAMAL). Residues 125–146 (DRCVAICYPLRRAIVFTRQLVT) are Cytoplasmic-facing. The helical transmembrane segment at 147–167 (YIVVGVTLRPAILVIPCLLLI) threads the bilayer. Residues 168 to 203 (KCHLKLYRTKLIYHTYCERVALVKLATEDVYINKVY) lie on the Extracellular side of the membrane. A helical transmembrane segment spans residues 204-224 (GILGAFIVGGLDFIFITLSYI). Topologically, residues 225–255 (QIFITVFHLPLKEARLKVFNTCIPHIYVFFQ) are cytoplasmic. The helical transmembrane segment at 256-276 (FYLLAFFFIFYSQIWILYPII) threads the bilayer. Residues 277–279 (CTY) lie on the Extracellular side of the membrane. A helical membrane pass occupies residues 280 to 300 (HLVQSLPTGPTIPQPLYLWVK). Residues 301 to 304 (DQTH) are Cytoplasmic-facing.

It belongs to the G-protein coupled receptor 1 family.

It localises to the cell membrane. In terms of biological role, odorant receptor. This Homo sapiens (Human) protein is Olfactory receptor 52A4.